A 527-amino-acid polypeptide reads, in one-letter code: Type-2 serine--tRNA ligase (527 aa).

Ala-317 lines the L-serine pocket. Cys-319 serves as a coordination point for Zn(2+). Arg-349 is an L-serine binding site. ATP-binding positions include 349–351 and 360–361; these read RWE and RV. Position 366–368 (366–368) interacts with L-serine; it reads RIE. Residues Glu-368 and Cys-478 each coordinate Zn(2+). Residue Arg-485 participates in ATP binding.

This sequence belongs to the class-II aminoacyl-tRNA synthetase family. Type-2 seryl-tRNA synthetase subfamily. As to quaternary structure, homodimer. Zn(2+) is required as a cofactor.

The protein localises to the cytoplasm. The catalysed reaction is tRNA(Ser) + L-serine + ATP = L-seryl-tRNA(Ser) + AMP + diphosphate + H(+). The enzyme catalyses tRNA(Sec) + L-serine + ATP = L-seryl-tRNA(Sec) + AMP + diphosphate + H(+). It participates in aminoacyl-tRNA biosynthesis; selenocysteinyl-tRNA(Sec) biosynthesis; L-seryl-tRNA(Sec) from L-serine and tRNA(Sec): step 1/1. Its function is as follows. Catalyzes the attachment of serine to tRNA(Ser). Is also able to aminoacylate tRNA(Sec) with serine, to form the misacylated tRNA L-seryl-tRNA(Sec), which will be further converted into selenocysteinyl-tRNA(Sec). This chain is Type-2 serine--tRNA ligase, found in Methanopyrus kandleri (strain AV19 / DSM 6324 / JCM 9639 / NBRC 100938).